The sequence spans 296 residues: 4-hydroxybenzoate octaprenyltransferase (296 aa).

The next 8 helical transmembrane spans lie at 28–48, 52–72, 102–122, 146–166, 169–189, 219–239, 241–261, and 275–295; these read PIGI…AGKG, LINI…GCVI, ALVF…LTNA, YYPQ…AFTA, GDLP…TVGY, VIIL…GARF, LGGW…WEFW, and FLHN…DYAF.

The protein belongs to the UbiA prenyltransferase family. It depends on Mg(2+) as a cofactor.

Its subcellular location is the cell inner membrane. The catalysed reaction is all-trans-octaprenyl diphosphate + 4-hydroxybenzoate = 4-hydroxy-3-(all-trans-octaprenyl)benzoate + diphosphate. It participates in cofactor biosynthesis; ubiquinone biosynthesis. Its function is as follows. Catalyzes the prenylation of para-hydroxybenzoate (PHB) with an all-trans polyprenyl group. Mediates the second step in the final reaction sequence of ubiquinone-8 (UQ-8) biosynthesis, which is the condensation of the polyisoprenoid side chain with PHB, generating the first membrane-bound Q intermediate 3-octaprenyl-4-hydroxybenzoate. This is 4-hydroxybenzoate octaprenyltransferase from Pseudomonas fluorescens (strain SBW25).